The following is a 311-amino-acid chain: tRNA dimethylallyltransferase (311 aa).

Residue 10–17 (GPTAVGKS) participates in ATP binding. 12–17 (TAVGKS) lines the substrate pocket. Residues 35–38 (DSMQ) are interaction with substrate tRNA.

This sequence belongs to the IPP transferase family. In terms of assembly, monomer. Mg(2+) is required as a cofactor.

The catalysed reaction is adenosine(37) in tRNA + dimethylallyl diphosphate = N(6)-dimethylallyladenosine(37) in tRNA + diphosphate. Catalyzes the transfer of a dimethylallyl group onto the adenine at position 37 in tRNAs that read codons beginning with uridine, leading to the formation of N6-(dimethylallyl)adenosine (i(6)A). The polypeptide is tRNA dimethylallyltransferase (Carboxydothermus hydrogenoformans (strain ATCC BAA-161 / DSM 6008 / Z-2901)).